Reading from the N-terminus, the 377-residue chain is MSNGIVIIGSGFAARQLVKNIRKQDASIPLTLIAADSMDEYNKPDLSHVISQGQRADDLTRQTAGEFAEQFNLRLFPHTWVTDIDAEAHVVKSQNNQWQYDKLVLATGASAFVPPVPGRELMLTLNSQQEYRACETQLRDARRVLIVGGGLIGSELAMDFCRAGKAVTLIDNAASILASLMPTEVSSRLQHRLTEMGVHLLLKSQLQGLEKTDSGILATLDRQRCIEVDAVIAATGLRPETALARRAGLTINRGVCVDSYLQTSNADIYALGDCAEINGQVLPFLQPIQLSAMVLAKNLLGNNTPLKLPAMLVKIKTPELPLHLAGETQRQDLRWQINTERQGMVARGVDDADQLRAFVVSEDRMKEAFGLLKTLSM.

The protein belongs to the FAD-dependent oxidoreductase family. Requires FAD as cofactor.

Its subcellular location is the cytoplasm. It carries out the reaction 2 reduced [nitric oxide reductase rubredoxin domain] + NAD(+) + H(+) = 2 oxidized [nitric oxide reductase rubredoxin domain] + NADH. It functions in the pathway nitrogen metabolism; nitric oxide reduction. Its function is as follows. One of at least two accessory proteins for anaerobic nitric oxide (NO) reductase. Reduces the rubredoxin moiety of NO reductase. This chain is Nitric oxide reductase FlRd-NAD(+) reductase, found in Escherichia coli O6:H1 (strain CFT073 / ATCC 700928 / UPEC).